A 512-amino-acid chain; its full sequence is Cytochrome P450 71BT1 (512 aa).

Residues 1 to 24 form the signal peptide; the sequence is MENLFIFLFALLLFCFMLLKLSKK. 2 N-linked (GlcNAc...) asparagine glycosylation sites follow: asparagine 111 and asparagine 168. A heme-binding site is contributed by cysteine 447.

Belongs to the cytochrome P450 family.

This chain is Cytochrome P450 71BT1, found in Catharanthus roseus (Madagascar periwinkle).